A 142-amino-acid polypeptide reads, in one-letter code: Large ribosomal subunit protein uL13 (142 aa).

Belongs to the universal ribosomal protein uL13 family. Part of the 50S ribosomal subunit.

This protein is one of the early assembly proteins of the 50S ribosomal subunit, although it is not seen to bind rRNA by itself. It is important during the early stages of 50S assembly. The sequence is that of Large ribosomal subunit protein uL13 from Xanthomonas campestris pv. campestris (strain ATCC 33913 / DSM 3586 / NCPPB 528 / LMG 568 / P 25).